The sequence spans 2696 residues: Histone-lysine N-methyltransferase, H3 lysine-36 specific (2696 aa).

Serine 117 bears the Phosphoserine mark. Disordered regions lie at residues 207-252 (MGSE…EKAA) and 281-311 (DPDS…PFCQ). The span at 236–248 (QKNKQRNEVDGSN) shows a compositional bias: basic and acidic residues. Composition is skewed to polar residues over residues 281–290 (DPDSSTSTLG) and 297–306 (GTSSSSTSQE). In terms of domain architecture, PWWP 1 spans 323–388 (VGDLIWAKFK…AGKAIVMFEG (66 aa)). A phosphoserine mark is found at serine 483 and serine 486. The segment at 487–514 (ADEKEKPCAKSRARKSSDNPKRTSVKKG) is disordered. A Phosphoserine modification is found at serine 766. Residues 872–891 (LGEDVSDSGTSKPSKPLLFS) are disordered. Lysine 906 is covalently cross-linked (Glycyl lysine isopeptide (Lys-Gly) (interchain with G-Cter in SUMO2)). Disordered regions lie at residues 936-1035 (YRSP…DAFS), 1067-1093 (VLQG…PLQI), 1112-1134 (SKVK…NGKG), 1243-1272 (SIGD…SEKK), 1294-1344 (PKKK…EPPV), 1382-1428 (SPRP…KKGD), and 1480-1534 (KMQC…MQGE). Over residues 948 to 961 (SPVGVSKVLVSGGS) the composition is skewed to low complexity. Positions 971-982 (GTQNSANPSPSG) are enriched in polar residues. Basic and acidic residues-rich tracts occupy residues 1000-1017 (SDKR…DCVT), 1070-1090 (GDRE…KEDP), and 1112-1124 (SKVK…KISE). Basic and acidic residues predominate over residues 1300–1314 (KVQEQVHKVSSRCEE). Positions 1323–1337 (SSAQNKQVDENSLIS) are enriched in polar residues. A Glycyl lysine isopeptide (Lys-Gly) (interchain with G-Cter in SUMO2) cross-link involves residue lysine 1339. A Phosphoserine modification is found at serine 1510. Positions 1513–1523 (ETVEEGVEHDP) are enriched in basic and acidic residues. PHD-type zinc fingers lie at residues 1543–1589 (ENVC…CRTG), 1590–1646 (IHTC…CHAA), and 1707–1751 (VSWC…CKAG). Positions 1756–1818 (YREIVWVKVG…QARVFPYMEG (63 aa)) constitute a PWWP 2 domain. In terms of domain architecture, AWS spans 1890–1940 (SEIPRCNCKATDENPCGIDSECINRMLLYECHPTVCPAGGRCQNQCFSKRQ). Positions 1942 to 2059 (PEVEIFRTLQ…AGTELTFNYN (118 aa)) constitute an SET domain. S-adenosyl-L-methionine-binding positions include 1952-1954 (RGW), 1994-1997 (TNFY), 2020-2021 (NH), asparagine 2065, and lysine 2071. Residues 2060–2066 (LECLGNG) are inhibits enzyme activity in the absence of bound histone. Residues 2066-2082 (GKTVCKCGAPNCSGFLG) enclose the Post-SET domain. Residues 2091–2111 (ATEEKSKKFKKKQQGKRRTQG) are disordered. The segment covering 2097-2108 (KKFKKKQQGKRR) has biased composition (basic residues). A PHD-type 4; atypical zinc finger spans residues 2118 to 2165 (EDECFSCGDAGQLVSCKKPGCPKVYHADCLNLTKRPAGKWECPWHQCD). Residues 2213 to 2422 (LEPGEIREYV…SLSQRLPPPE (210 aa)) form a disordered region. Residues 2222–2232 (VPPPVPLPPGP) show a composition bias toward pro residues. The segment covering 2281 to 2298 (RPLERTDSRPQPLDKVRD) has biased composition (basic and acidic residues). A compositionally biased stretch (polar residues) spans 2303-2314 (GTKSQSLVSSQR). A compositionally biased stretch (low complexity) spans 2330 to 2348 (SDKPSPVTSPSSSPSVRSQ). Position 2369 is a phosphoserine (serine 2369). 2 stretches are compositionally biased toward polar residues: residues 2371 to 2381 (RPQSLEKTSVP) and 2394 to 2404 (ITSSPKPQTSD). The residue at position 2462 (threonine 2462) is a Phosphothreonine. Disordered stretches follow at residues 2464-2499 (RQKE…GLGH), 2553-2575 (TQAS…QSPG), 2595-2616 (KSGQ…EEKK), and 2665-2696 (LGRG…SEQK). A Phosphoserine modification is found at serine 2471. Lysine 2616 is covalently cross-linked (Glycyl lysine isopeptide (Lys-Gly) (interchain with G-Cter in SUMO2)). The segment covering 2674–2686 (EQNTLPALNQAPS) has biased composition (polar residues).

The protein belongs to the class V-like SAM-binding methyltransferase superfamily. As to quaternary structure, interacts with the ligand-binding domains of RARA and THRA in the absence of ligand; in the presence of ligand the interaction is severely disrupted but some binding still occurs. Interacts with the ligand-binding domains of RXRA and ESRRA only in the presence of ligand. Interacts with ZNF496. Interacts with AR DNA- and ligand-binding domains. As to expression, expressed in the fetal/adult brain, kidney, skeletal muscle, spleen, and the thymus, and faintly in the lung.

It localises to the nucleus. The protein localises to the chromosome. The catalysed reaction is L-lysyl(36)-[histone H3] + 2 S-adenosyl-L-methionine = N(6),N(6)-dimethyl-L-lysyl(36)-[histone H3] + 2 S-adenosyl-L-homocysteine + 2 H(+). Functionally, histone methyltransferase that dimethylates Lys-36 of histone H3 (H3K36me2). Transcriptional intermediary factor capable of both negatively or positively influencing transcription, depending on the cellular context. The sequence is that of Histone-lysine N-methyltransferase, H3 lysine-36 specific (NSD1) from Homo sapiens (Human).